The chain runs to 72 residues: Translation initiation factor IF-1 (72 aa).

The S1-like domain occupies 1-72; that stretch reads MAKDDVIEVE…TRGRITYRYK (72 aa). A Phosphotyrosine modification is found at Tyr-60.

The protein belongs to the IF-1 family. Component of the 30S ribosomal translation pre-initiation complex which assembles on the 30S ribosome in the order IF-2 and IF-3, IF-1 and N-formylmethionyl-tRNA(fMet); mRNA recruitment can occur at any time during PIC assembly.

It localises to the cytoplasm. One of the essential components for the initiation of protein synthesis. Stabilizes the binding of IF-2 and IF-3 on the 30S subunit to which N-formylmethionyl-tRNA(fMet) subsequently binds. Helps modulate mRNA selection, yielding the 30S pre-initiation complex (PIC). Upon addition of the 50S ribosomal subunit IF-1, IF-2 and IF-3 are released leaving the mature 70S translation initiation complex. The chain is Translation initiation factor IF-1 from Bacillus pumilus (strain SAFR-032).